We begin with the raw amino-acid sequence, 61 residues long: Small ribosomal subunit protein uS14 (61 aa).

The Zn(2+) site is built by Cys24, Cys27, Cys40, and Cys43.

This sequence belongs to the universal ribosomal protein uS14 family. Zinc-binding uS14 subfamily. Part of the 30S ribosomal subunit. Contacts proteins S3 and S10. Zn(2+) serves as cofactor.

In terms of biological role, binds 16S rRNA, required for the assembly of 30S particles and may also be responsible for determining the conformation of the 16S rRNA at the A site. The protein is Small ribosomal subunit protein uS14 of Herpetosiphon aurantiacus (strain ATCC 23779 / DSM 785 / 114-95).